A 210-amino-acid chain; its full sequence is Large ribosomal subunit protein bL25 (210 aa).

The segment at 1-23 is disordered; the sequence is MSDIGTLSAKGRDRAGKGAARAT.

Belongs to the bacterial ribosomal protein bL25 family. CTC subfamily. As to quaternary structure, part of the 50S ribosomal subunit; part of the 5S rRNA/L5/L18/L25 subcomplex. Contacts the 5S rRNA. Binds to the 5S rRNA independently of L5 and L18.

In terms of biological role, this is one of the proteins that binds to the 5S RNA in the ribosome where it forms part of the central protuberance. This Rhodospirillum rubrum (strain ATCC 11170 / ATH 1.1.1 / DSM 467 / LMG 4362 / NCIMB 8255 / S1) protein is Large ribosomal subunit protein bL25.